Consider the following 79-residue polypeptide: Submaxillary gland androgen-regulated protein 3B (79 aa).

The N-terminal stretch at 1 to 22 is a signal peptide; sequence MKSLTWILGLWALAACFTPGES. Residues 19–79 form a disordered region; it reads PGESQRGPRG…GIFPPPPPQP (61 aa). Residue Gln23 is modified to Pyrrolidone carboxylic acid. Over residues 28–79 the composition is skewed to pro residues; sequence GPYPPGPLAPPQPFGPGFVPPPPPPPYGPGRIPPPPPAPYGPGIFPPPPPQP.

It belongs to the PROL1/PROL3 family. Post-translationally, P-A and D1A are probably degradation products of P-B. Secreted into saliva by submaxillary gland. Not expressed in heart, brain, lung, liver, skeletal muscle, Kidney, pancreas or placenta.

The protein resides in the secreted. In Homo sapiens (Human), this protein is Submaxillary gland androgen-regulated protein 3B (SMR3B).